The primary structure comprises 201 residues: uncharacterized protein (201 aa).

Disordered stretches follow at residues 46 to 80 and 143 to 201; these read PLVN…SYDE and SSTS…ANPA. Polar residues-rich tracts occupy residues 64–78 and 143–167; these read GSQN…SQSY and SSTS…NSPA.

This is an uncharacterized protein from Legionella pneumophila.